Consider the following 1407-residue polypeptide: Adenylate cyclase, aggregation specific (1407 aa).

The Cytoplasmic segment spans residues 1 to 219; that stretch reads MASSSPMFND…KGYLHQHYNS (219 aa). The segment at 28 to 131 is disordered; that stretch reads NELHDGNGGG…SNSVANGGHL (104 aa). Positions 51 to 63 are enriched in polar residues; sequence LNKSQNQPYTQYN. The segment covering 64–75 has biased composition (gly residues); it reads NGGGGGGGGGGH. 2 stretches are compositionally biased toward low complexity: residues 80–90 and 98–115; these read HLNLNSITNNH and PNTLSTPHNNNHNNNNHS. The next 6 helical transmembrane spans lie at 220–240, 244–264, 276–296, 304–324, 325–345, and 353–373; these read QIMLLRITNLIGIVAVSYGFT, IFMLIAIRILCFNLFAFSIFL, LFHPLFLFSFTTFFITILLEY, ILFLYVVIFCCLYALGCLLFI, WMVMCNLMNAICFIIFIFLES, and ISFVIYILTMFLVGASHLYVL. The Cytoplasmic portion of the chain corresponds to 374-962; the sequence is EKFRKESFIA…KYVIINNVVE (589 aa). A Guanylate cyclase 1 domain is found at 438–661; the sequence is SILCFDIVQF…DTIARSHTLE (224 aa). Residues aspartate 443, isoleucine 444, and aspartate 488 each contribute to the Mg(2+) site. Disordered stretches follow at residues 502–590, 751–799, and 828–876; these read AKKQ…EEIE, KSNN…VLGE, and NDIV…EEDF. Composition is skewed to low complexity over residues 505-526, 535-581, and 752-795; these read QMPNSKSTPLLQSTSSTSVNNI, NNNN…NNSG, and SNNN…SSSS. Polar residues predominate over residues 828–846; sequence NDIVSPSLTSNSPILDTTV. The span at 847–871 shows a compositional bias: low complexity; that stretch reads NNNNNNNNTNNNNKNQNNIYGNNNN. Helical transmembrane passes span 963-979, 992-1012, 1018-1038, 1071-1091, and 1105-1125; these read TKFFLVIGLILHLMFYL, SNVIYLVMGIAFLVYIGLSFT, PLVYQIAFFILLCAFGVCTVL, LSVLFLNLFIFSFFIICSILI, and IGFVIVLLIQICSSYGMKLAM. The Guanylate cyclase 2 domain maps to 1189–1311; that stretch reads SIMFIQIAGF…DTANTASRMQ (123 aa). A helical transmembrane segment spans residues 1378-1398; it reads ATPAGIASPLSGTLLGEIGSF. Residues 1399–1407 are Cytoplasmic-facing; sequence TTPRFHLSS.

Belongs to the adenylyl cyclase class-4/guanylyl cyclase family. It depends on Mg(2+) as a cofactor. In terms of tissue distribution, expressed throughout the structure in the tipped mound and finger. Expressed primarily in the prestalk region of the slug. In the early culminant expression is increased in the posterior prespore and anterior-most regions and expands into the developing stalk. In the mid and late culminant it is expressed throughout the stalk.

It localises to the membrane. The protein localises to the cell projection. Its subcellular location is the uropodium. It carries out the reaction ATP = 3',5'-cyclic AMP + diphosphate. Its activity is regulated as follows. Regulated by cyclic AMP receptor 1 through a guanine nucleotide binding protein and protein CRAC. Both positively and negatively regulated by extracellular cAMP; this regulation is part of the mechanism that establishes the oscillatory cAMP waves during aggregation. Coordinates cell aggregation by synthesizing the cAMP that influences differentiation and morphogenesis of cells within a developing multicellular structure. The protein is Adenylate cyclase, aggregation specific (acaA) of Dictyostelium discoideum (Social amoeba).